The following is a 432-amino-acid chain: Enolase (432 aa).

A (2R)-2-phosphoglycerate-binding site is contributed by glutamine 167. The active-site Proton donor is glutamate 209. The Mg(2+) site is built by aspartate 246, glutamate 290, and aspartate 317. Residues lysine 342, arginine 371, serine 372, and lysine 393 each coordinate (2R)-2-phosphoglycerate. The active-site Proton acceptor is the lysine 342.

The protein belongs to the enolase family. Component of the RNA degradosome, a multiprotein complex involved in RNA processing and mRNA degradation. Requires Mg(2+) as cofactor.

The protein localises to the cytoplasm. Its subcellular location is the secreted. It localises to the cell surface. The enzyme catalyses (2R)-2-phosphoglycerate = phosphoenolpyruvate + H2O. Its pathway is carbohydrate degradation; glycolysis; pyruvate from D-glyceraldehyde 3-phosphate: step 4/5. Its function is as follows. Catalyzes the reversible conversion of 2-phosphoglycerate (2-PG) into phosphoenolpyruvate (PEP). It is essential for the degradation of carbohydrates via glycolysis. The protein is Enolase of Cronobacter sakazakii (strain ATCC BAA-894) (Enterobacter sakazakii).